Reading from the N-terminus, the 312-residue chain is tRNA uridine(34) hydroxylase (312 aa).

The region spanning 123–217 (SDPEVLLIDT…YLEEVPQEQS (95 aa)) is the Rhodanese domain. Cysteine 177 acts as the Cysteine persulfide intermediate in catalysis. The span at 282–293 (ARERQKQIELAR) shows a compositional bias: basic and acidic residues. The interval 282–312 (ARERQKQIELARQRNQPHPLGRDPRQSTLEN) is disordered.

The protein belongs to the TrhO family.

It catalyses the reaction uridine(34) in tRNA + AH2 + O2 = 5-hydroxyuridine(34) in tRNA + A + H2O. Catalyzes oxygen-dependent 5-hydroxyuridine (ho5U) modification at position 34 in tRNAs. This Pseudomonas aeruginosa (strain UCBPP-PA14) protein is tRNA uridine(34) hydroxylase.